A 384-amino-acid chain; its full sequence is Opsin-3 (384 aa).

Topologically, residues 1–62 (MATNFTQELY…VSKYWHYVLA (62 aa)) are extracellular. A glycan (N-linked (GlcNAc...) asparagine) is linked at asparagine 4. The chain crosses the membrane as a helical span at residues 63–83 (LIYTMLMVTSLTGNGIVIWIF). Residues 84–94 (STSKSLRSASN) lie on the Cytoplasmic side of the membrane. Residues 95 to 115 (MFVINLAVFDLMMMLEMPLLI) traverse the membrane as a helical segment. Residues 116 to 132 (MNSFYQRLVGYQLGCDV) are Extracellular-facing. Residues cysteine 130 and cysteine 207 are joined by a disulfide bond. The chain crosses the membrane as a helical span at residues 133-153 (YAVLGSLSGIGGAITNAVIAF). Over 154 to 171 (DRYKTISSPLDGRINTVQ) the chain is Cytoplasmic. A helical membrane pass occupies residues 172–192 (AGLLIAFTWFWALPFTILPAF). Topologically, residues 193 to 219 (RIWGRFVPEGFLTTCSFDYFTEDQDTE) are extracellular. A helical transmembrane segment spans residues 220–240 (VFVACIFVWSYCIPMALICYF). The Cytoplasmic segment spans residues 241-284 (YSQLFGAVRLHERMLQEQAKKMNVKSLASNKEDNSRSVEIRIAK). The helical transmembrane segment at 285–305 (VAFTIFFLFICAWTPYAFVTM) threads the bilayer. Residues 306 to 312 (TGAFGDR) are Extracellular-facing. A helical transmembrane segment spans residues 313–333 (TLLTPIATMIPAVCCKVVSCI). The Cytoplasmic portion of the chain corresponds to 334 to 384 (DPWVYAINHPRYRAELQKRLPWMGVREQDPDAVSTTTSVATAGFQPPAAEA).

The protein belongs to the G-protein coupled receptor 1 family. Opsin subfamily. As to expression, in the retina, expression is essentially uniformly distributed but a higher level is seen in the ventral region where the B-cells are localized.

Its subcellular location is the membrane. Its function is as follows. Visual pigments are the light-absorbing molecules that mediate vision. They consist of an apoprotein, opsin, covalently linked to cis-retinal. May play a role in photoperiodic photoreception. In Manduca sexta (Tobacco hawkmoth), this protein is Opsin-3 (OP3).